The primary structure comprises 252 residues: Chitooligosaccharide deacetylase (252 aa).

The Mg(2+) site is built by His61 and His125.

It belongs to the YdjC deacetylase family. ChbG subfamily. As to quaternary structure, homodimer. Requires Mg(2+) as cofactor.

The protein localises to the cytoplasm. It carries out the reaction N,N'-diacetylchitobiose + H2O = N-acetyl-beta-D-glucosaminyl-(1-&gt;4)-D-glucosamine + acetate. The catalysed reaction is diacetylchitobiose-6'-phosphate + H2O = N'-monoacetylchitobiose-6'-phosphate + acetate. Its pathway is glycan degradation; chitin degradation. Functionally, involved in the degradation of chitin. ChbG is essential for growth on the acetylated chitooligosaccharides chitobiose and chitotriose but is dispensable for growth on cellobiose and chitosan dimer, the deacetylated form of chitobiose. Deacetylation of chitobiose-6-P and chitotriose-6-P is necessary for both the activation of the chb promoter by the regulatory protein ChbR and the hydrolysis of phosphorylated beta-glucosides by the phospho-beta-glucosidase ChbF. Catalyzes the removal of only one acetyl group from chitobiose-6-P to yield monoacetylchitobiose-6-P, the inducer of ChbR and the substrate of ChbF. In Salmonella schwarzengrund (strain CVM19633), this protein is Chitooligosaccharide deacetylase.